The following is a 139-amino-acid chain: Glutamate mutase sigma subunit (139 aa).

The B12-binding domain maps to 4–139 (KIKLVLGVIG…DLHADFPDHA (136 aa)). Residues 14–18 (SDCHA), His-17, 62–64 (SSL), and 94–98 (NIVVG) contribute to the adenosylcob(III)alamin site.

This sequence belongs to the methylaspartate mutase GlmS subunit family. In terms of assembly, heterotetramer composed of 2 epsilon subunits (GlmE) and 2 sigma subunits (GlmS). GlmE exists as a homodimer and GlmS as a monomer. It depends on adenosylcob(III)alamin as a cofactor.

It carries out the reaction (2S,3S)-3-methyl-L-aspartate = L-glutamate. The protein operates within amino-acid degradation; L-glutamate degradation via mesaconate pathway; acetate and pyruvate from L-glutamate: step 1/4. Catalyzes the carbon skeleton rearrangement of L-glutamate to L-threo-3-methylaspartate ((2S,3S)-3-methylaspartate). The protein is Glutamate mutase sigma subunit of Treponema denticola (strain ATCC 35405 / DSM 14222 / CIP 103919 / JCM 8153 / KCTC 15104).